The following is a 1064-amino-acid chain: MLGDGNEGMSTIPGLNQIQFEGFCRFIDQGLTEELSKFPKIEDTDQEIEFQLFMERYQLVEPLRKERDAVYESLTYSSEFYVSAGLIWKTSRDMQEQTILIGNIPLMNSLGTSIVKGIYRIVINQILQSPGIYYRSELDHNEISVYTGTIISDWGGRSELEIDRKARIWARVSRKQKISILVLSSAMGSNLKEILDNVFYPEIFLSFLKDKERKKIGSKENAILEFYQQFACVGGDPVFSESLCKELQTKFFQQRCELGRIGRRNMNRRLNLDIPQNNTFLLPRDILAAADHLIEQKFGMGTLDDMNHLKNKRIRSVADLLQDQLGLALVRLEDEVRETICGPIRHKWRTTPHPQNLVTSTPLTTTYESFFGSHPLSQVLDQTNPLTQIVHGRKWSYLDPGGLTGRTASFRIRDIHPSHYGRICPIDTSEGINVGLIGSLAIHAKIGHWGSLESPFYEISERSTGVQMLYLSPGRDEYYTVAAGNSLALNQDIQEEEVVPARYRQEFLTIAWEQVHFRSILPFQYFSIGASLIPFIEHNDANRALMSSNMQRQAVPLSRPEKCIVGTGLERQVALDSGALAIAEREGKIVSTDTEKILFSGNGDTLSIPLVMYQSSNKNTCMHQKPQVQRGKCIKKGQILADGAATVGGELALGKNVLVAYMPWEGYNSEDAVLISERLVYEDIYTSFHIRKYEIQTAGTERITNEIPHLEAHLLRNLDKNGIVMLGSWVETGAILVGKLTPEVVKESPANRLVYDIVGIQVSTSKDTCLKLPIGGRGRVIDVRWIQKRGDNDNPETIRIYISQKREIKVGDKVAGRHGNKGIISKILPRQDMPYLQDGRPVDMVFNPLGVPSRMNVGQIFECSLGLAGGLLDRHYRIVPFDERYEQEASRKLVFSELYEASKQTTNPWVFEPEYPGKSRIFDGRSGNPFEQPILIGKPYILKLIHQVDDKIHGRSVGNYTHITQQPLRGRAKGGGQRVGEMEVWALEGFGVAHILQEMLTYKSDHIRARQKIPGTTMIGGTIPNPEDAPESFRVLVRELRSLALELNHFLVSEKNFQINRKEA.

This sequence belongs to the RNA polymerase beta chain family. In terms of assembly, in plastids the minimal PEP RNA polymerase catalytic core is composed of four subunits: alpha, beta, beta', and beta''. When a (nuclear-encoded) sigma factor is associated with the core the holoenzyme is formed, which can initiate transcription.

The protein resides in the plastid. The protein localises to the chloroplast. It carries out the reaction RNA(n) + a ribonucleoside 5'-triphosphate = RNA(n+1) + diphosphate. Its function is as follows. DNA-dependent RNA polymerase catalyzes the transcription of DNA into RNA using the four ribonucleoside triphosphates as substrates. The protein is DNA-directed RNA polymerase subunit beta of Jasminum nudiflorum (Winter jasmine).